We begin with the raw amino-acid sequence, 205 residues long: Protein N-terminal glutamine amidohydrolase (205 aa).

Active-site residues include C20, H74, and D90.

It belongs to the NTAQ1 family. In terms of assembly, monomer.

The enzyme catalyses N-terminal L-glutaminyl-[protein] + H2O = N-terminal L-glutamyl-[protein] + NH4(+). In terms of biological role, mediates the side-chain deamidation of N-terminal glutamine residues to glutamate, an important step in N-end rule pathway of protein degradation. Conversion of the resulting N-terminal glutamine to glutamate renders the protein susceptible to arginylation, polyubiquitination and degradation as specified by the N-end rule. Does not act on substrates with internal or C-terminal glutamine and does not act on non-glutamine residues in any position. The protein is Protein N-terminal glutamine amidohydrolase (tun) of Drosophila mojavensis (Fruit fly).